Reading from the N-terminus, the 68-residue chain is Neuronal regeneration-related protein (68 aa).

As to quaternary structure, interacts with FLNA. Interacts with the latency-associated peptides (LAP) of TGFB1 and TGFB2; the interaction results in a decrease in TGFB autoinduction. Phosphorylated on Ser-59. Phosphorylation decreases stability and activity.

Its subcellular location is the cytoplasm. Functionally, may have roles in neural function. Ectopic expression promotes axonal regeneration. Also augments motility of gliomas. May also have roles in cellular differentiation. Induces differentiation of fibroblast into myofibroblast and myofibroblast ameboid migration. Increases retinoic-acid regulation of lipid-droplet biogenesis. Down-regulates the expression of TGFB1 and TGFB2 but not of TGFB3. May play a role in the regulation of alveolar generation. The protein is Neuronal regeneration-related protein (Nrep) of Rattus norvegicus (Rat).